A 429-amino-acid chain; its full sequence is Probable M18 family aminopeptidase 2 (429 aa).

Zn(2+) is bound by residues His82, His156, and His401.

Belongs to the peptidase M18 family. It depends on Zn(2+) as a cofactor.

The sequence is that of Probable M18 family aminopeptidase 2 from Azotobacter vinelandii (strain DJ / ATCC BAA-1303).